The chain runs to 547 residues: Dihydroxy-acid dehydratase (547 aa).

Asp-78 provides a ligand contact to Mg(2+). Cys-119 is a [2Fe-2S] cluster binding site. 2 residues coordinate Mg(2+): Asp-120 and Lys-121. At Lys-121 the chain carries N6-carboxylysine. Cys-191 is a [2Fe-2S] cluster binding site. Glu-439 contributes to the Mg(2+) binding site. Ser-464 functions as the Proton acceptor in the catalytic mechanism.

The protein belongs to the IlvD/Edd family. As to quaternary structure, homodimer. The cofactor is [2Fe-2S] cluster. Mg(2+) serves as cofactor.

It catalyses the reaction (2R)-2,3-dihydroxy-3-methylbutanoate = 3-methyl-2-oxobutanoate + H2O. The enzyme catalyses (2R,3R)-2,3-dihydroxy-3-methylpentanoate = (S)-3-methyl-2-oxopentanoate + H2O. It functions in the pathway amino-acid biosynthesis; L-isoleucine biosynthesis; L-isoleucine from 2-oxobutanoate: step 3/4. It participates in amino-acid biosynthesis; L-valine biosynthesis; L-valine from pyruvate: step 3/4. Functionally, functions in the biosynthesis of branched-chain amino acids. Catalyzes the dehydration of (2R,3R)-2,3-dihydroxy-3-methylpentanoate (2,3-dihydroxy-3-methylvalerate) into 2-oxo-3-methylpentanoate (2-oxo-3-methylvalerate) and of (2R)-2,3-dihydroxy-3-methylbutanoate (2,3-dihydroxyisovalerate) into 2-oxo-3-methylbutanoate (2-oxoisovalerate), the penultimate precursor to L-isoleucine and L-valine, respectively. This Methanospirillum hungatei JF-1 (strain ATCC 27890 / DSM 864 / NBRC 100397 / JF-1) protein is Dihydroxy-acid dehydratase.